The following is a 311-amino-acid chain: 4-hydroxy-tetrahydrodipicolinate synthase (311 aa).

Position 49 (Thr49) interacts with pyruvate. Residue Tyr138 is the Proton donor/acceptor of the active site. Residue Lys166 is the Schiff-base intermediate with substrate of the active site. Residue Ile207 coordinates pyruvate.

It belongs to the DapA family. In terms of assembly, homotetramer; dimer of dimers.

Its subcellular location is the cytoplasm. The enzyme catalyses L-aspartate 4-semialdehyde + pyruvate = (2S,4S)-4-hydroxy-2,3,4,5-tetrahydrodipicolinate + H2O + H(+). It functions in the pathway amino-acid biosynthesis; L-lysine biosynthesis via DAP pathway; (S)-tetrahydrodipicolinate from L-aspartate: step 3/4. Its function is as follows. Catalyzes the condensation of (S)-aspartate-beta-semialdehyde [(S)-ASA] and pyruvate to 4-hydroxy-tetrahydrodipicolinate (HTPA). The chain is 4-hydroxy-tetrahydrodipicolinate synthase from Limosilactobacillus fermentum (strain NBRC 3956 / LMG 18251) (Lactobacillus fermentum).